A 99-amino-acid polypeptide reads, in one-letter code: NADH-quinone oxidoreductase subunit K (99 aa).

Transmembrane regions (helical) follow at residues 3–23, 28–48, and 62–82; these read PMYYLYLSAVLFTLGAVGVLL, IIVFMCVELMLNAANLALVTF, and FFVMVVAAAEVVVGLAIIVAI.

The protein belongs to the complex I subunit 4L family. As to quaternary structure, NDH-1 is composed of 14 different subunits. Subunits NuoA, H, J, K, L, M, N constitute the membrane sector of the complex.

Its subcellular location is the cell membrane. It carries out the reaction a quinone + NADH + 5 H(+)(in) = a quinol + NAD(+) + 4 H(+)(out). Its function is as follows. NDH-1 shuttles electrons from NADH, via FMN and iron-sulfur (Fe-S) centers, to quinones in the respiratory chain. The immediate electron acceptor for the enzyme in this species is believed to be a menaquinone. Couples the redox reaction to proton translocation (for every two electrons transferred, four hydrogen ions are translocated across the cytoplasmic membrane), and thus conserves the redox energy in a proton gradient. The protein is NADH-quinone oxidoreductase subunit K of Acidothermus cellulolyticus (strain ATCC 43068 / DSM 8971 / 11B).